The primary structure comprises 186 residues: Transposons Tn1721 resolvase (186 aa).

Residues 4 to 137 (HRIGYVRVSS…EGIALAKQRG (134 aa)) enclose the Resolvase/invertase-type recombinase catalytic domain. Ser-12 serves as the catalytic O-(5'-phospho-DNA)-serine intermediate. The segment at residues 164–183 (KAQLAREFNISRETLYQYLR) is a DNA-binding region (H-T-H motif).

It belongs to the site-specific recombinase resolvase family.

Resolvase catalyzes the resolution (a site-specific recombination) of the cointegrated replicon to yield the final transposition products. This Escherichia coli protein is Transposons Tn1721 resolvase (tnpR).